Here is a 294-residue protein sequence, read N- to C-terminus: Golgi phosphoprotein 3 homolog sauron (294 aa).

Residues 1-52 (MNRSDGLVRRSVKPRENGGAEGGLNANTPDDNQDALDNLKDQEDNIDDGDSK) form a disordered region. Residues 37–52 (DNLKDQEDNIDDGDSK) show a composition bias toward basic and acidic residues. A 1,2-diacyl-sn-glycero-3-phospho-(1D-myo-inositol 4-phosphate) contacts are provided by Trp77, Arg86, Lys167, and Arg170. Residues 186–197 (EKQNFLLFDMTT) form a beta-hairpin required for oligomerization region.

The protein belongs to the GOLPH3/VPS74 family. In terms of assembly, homooligomer. Interacts with botv, Ext2 and ttv. Interacts with Vti1. Interacts with Vps35, Rab5, Chc, Rab11, zip, Pav and Septin1.

Its subcellular location is the golgi apparatus membrane. The protein resides in the cytoplasmic vesicle. The protein localises to the cleavage furrow. In terms of biological role, phosphatidylinositol-4-phosphate-binding protein that links Golgi membranes to the cytoskeleton and may participate in the tensile force required for vesicle budding from the Golgi. Thereby, may play a role in Golgi membrane trafficking and could indirectly give its flattened shape to the Golgi apparatus. May also bind to the coatomer to regulate Golgi membrane trafficking. May play a role in anterograde transport from the Golgi to the plasma membrane and regulate secretion. Also involved in the control of the localization of Golgi enzymes through interaction with their cytoplasmic part. Functions in cytokinesis by regulating contractile ring formation and vesicle trafficking during cleavage furrow ingression. May also have a role in the intital steps of central spindle formation. Can also bind phosphatidylinositol-3-phosphate and phosphatidylinositol-5-phosphate in vitro. This Drosophila melanogaster (Fruit fly) protein is Golgi phosphoprotein 3 homolog sauron.